The sequence spans 282 residues: Bifunctional protein FolD (282 aa).

Residues 166–168 (GAS) and I232 contribute to the NADP(+) site.

Belongs to the tetrahydrofolate dehydrogenase/cyclohydrolase family. In terms of assembly, homodimer.

The catalysed reaction is (6R)-5,10-methylene-5,6,7,8-tetrahydrofolate + NADP(+) = (6R)-5,10-methenyltetrahydrofolate + NADPH. It carries out the reaction (6R)-5,10-methenyltetrahydrofolate + H2O = (6R)-10-formyltetrahydrofolate + H(+). The protein operates within one-carbon metabolism; tetrahydrofolate interconversion. Its function is as follows. Catalyzes the oxidation of 5,10-methylenetetrahydrofolate to 5,10-methenyltetrahydrofolate and then the hydrolysis of 5,10-methenyltetrahydrofolate to 10-formyltetrahydrofolate. In Haemophilus influenzae (strain PittEE), this protein is Bifunctional protein FolD.